Consider the following 428-residue polypeptide: Oxysterol-binding protein 9 (428 aa).

A compositionally biased stretch (polar residues) spans 1-11; that stretch reads MTEVQSITTSG. Disordered stretches follow at residues 1–32 and 396–428; these read MTEV…STTN and ALIE…KNQK. Residues 18 to 32 show a composition bias toward low complexity; it reads SPSSSSSSISSSTTN. Residues 389 to 422 adopt a coiled-coil conformation; the sequence is EEAKKYKALIEDNQRKQKKEKDEKLKKDEKLKKE.

This sequence belongs to the OSBP family.

The polypeptide is Oxysterol-binding protein 9 (osbI) (Dictyostelium discoideum (Social amoeba)).